Consider the following 272-residue polypeptide: Shikimate dehydrogenase (NADP(+)) (272 aa).

Shikimate-binding positions include 14 to 16 (SKS) and T61. The active-site Proton acceptor is the K65. E77 is an NADP(+) binding site. Shikimate-binding residues include N86 and D102. NADP(+) is bound by residues 126–130 (GAGGA), 149–154 (NRTVSR), and M213. Y215 is a shikimate binding site. Position 237 (G237) interacts with NADP(+).

Belongs to the shikimate dehydrogenase family. As to quaternary structure, homodimer.

It catalyses the reaction shikimate + NADP(+) = 3-dehydroshikimate + NADPH + H(+). It participates in metabolic intermediate biosynthesis; chorismate biosynthesis; chorismate from D-erythrose 4-phosphate and phosphoenolpyruvate: step 4/7. Involved in the biosynthesis of the chorismate, which leads to the biosynthesis of aromatic amino acids. Catalyzes the reversible NADPH linked reduction of 3-dehydroshikimate (DHSA) to yield shikimate (SA). This Shigella dysenteriae serotype 1 (strain Sd197) protein is Shikimate dehydrogenase (NADP(+)).